Reading from the N-terminus, the 58-residue chain is Bowman-Birk type wound-induced trypsin inhibitor (58 aa).

7 disulfide bridges follow: Cys4-Cys57, Cys5-Cys20, Cys8-Cys53, Cys10-Cys18, Cys27-Cys34, Cys31-Cys46, and Cys36-Cys44.

This sequence belongs to the Bowman-Birk serine protease inhibitor family.

This is Bowman-Birk type wound-induced trypsin inhibitor from Medicago sativa (Alfalfa).